The chain runs to 98 residues: NADH-ubiquinone oxidoreductase chain 4L (98 aa).

The next 3 helical transmembrane spans lie at 1–21, 29–49, and 61–81; these read MSMV…GLLM, SLLC…VTIL, and IILL…LVMV.

Belongs to the complex I subunit 4L family. Core subunit of respiratory chain NADH dehydrogenase (Complex I) which is composed of 45 different subunits.

It is found in the mitochondrion inner membrane. It catalyses the reaction a ubiquinone + NADH + 5 H(+)(in) = a ubiquinol + NAD(+) + 4 H(+)(out). Core subunit of the mitochondrial membrane respiratory chain NADH dehydrogenase (Complex I) which catalyzes electron transfer from NADH through the respiratory chain, using ubiquinone as an electron acceptor. Part of the enzyme membrane arm which is embedded in the lipid bilayer and involved in proton translocation. The protein is NADH-ubiquinone oxidoreductase chain 4L (MT-ND4L) of Phoca fasciata (Ribbon seal).